Here is a 50-residue protein sequence, read N- to C-terminus: Large ribosomal subunit protein bL33 (50 aa).

Belongs to the bacterial ribosomal protein bL33 family.

The sequence is that of Large ribosomal subunit protein bL33 from Sulfurimonas denitrificans (strain ATCC 33889 / DSM 1251) (Thiomicrospira denitrificans (strain ATCC 33889 / DSM 1251)).